The chain runs to 280 residues: Large ribosomal subunit protein uL2 (280 aa).

Disordered stretches follow at residues 33–55 (LTEG…RRRG) and 224–266 (AMNP…KASQ). Residues 256 to 266 (TRTRNKNKASQ) are compositionally biased toward basic residues.

This sequence belongs to the universal ribosomal protein uL2 family. As to quaternary structure, part of the 50S ribosomal subunit. Forms a bridge to the 30S subunit in the 70S ribosome.

In terms of biological role, one of the primary rRNA binding proteins. Required for association of the 30S and 50S subunits to form the 70S ribosome, for tRNA binding and peptide bond formation. It has been suggested to have peptidyltransferase activity; this is somewhat controversial. Makes several contacts with the 16S rRNA in the 70S ribosome. The chain is Large ribosomal subunit protein uL2 from Ruegeria pomeroyi (strain ATCC 700808 / DSM 15171 / DSS-3) (Silicibacter pomeroyi).